The primary structure comprises 269 residues: 4-hydroxy-tetrahydrodipicolinate reductase (269 aa).

Residues Gly8–Met13, Gly98–Thr100, and Ala122–Met125 contribute to the NAD(+) site. His156 acts as the Proton donor/acceptor in catalysis. His157 lines the (S)-2,3,4,5-tetrahydrodipicolinate pocket. Residue Lys160 is the Proton donor of the active site. Gly166–Thr167 serves as a coordination point for (S)-2,3,4,5-tetrahydrodipicolinate.

This sequence belongs to the DapB family.

The protein resides in the cytoplasm. The catalysed reaction is (S)-2,3,4,5-tetrahydrodipicolinate + NAD(+) + H2O = (2S,4S)-4-hydroxy-2,3,4,5-tetrahydrodipicolinate + NADH + H(+). It carries out the reaction (S)-2,3,4,5-tetrahydrodipicolinate + NADP(+) + H2O = (2S,4S)-4-hydroxy-2,3,4,5-tetrahydrodipicolinate + NADPH + H(+). It functions in the pathway amino-acid biosynthesis; L-lysine biosynthesis via DAP pathway; (S)-tetrahydrodipicolinate from L-aspartate: step 4/4. Its function is as follows. Catalyzes the conversion of 4-hydroxy-tetrahydrodipicolinate (HTPA) to tetrahydrodipicolinate. The polypeptide is 4-hydroxy-tetrahydrodipicolinate reductase (Chromohalobacter salexigens (strain ATCC BAA-138 / DSM 3043 / CIP 106854 / NCIMB 13768 / 1H11)).